The primary structure comprises 562 residues: NAD-dependent malic enzyme (562 aa).

Tyrosine 101 functions as the Proton donor in the catalytic mechanism. Arginine 154 lines the NAD(+) pocket. Lysine 172 (proton acceptor) is an active-site residue. A divalent metal cation-binding residues include glutamate 243, aspartate 244, and aspartate 267. NAD(+) contacts are provided by aspartate 267 and asparagine 415.

It belongs to the malic enzymes family. As to quaternary structure, homotetramer. Mg(2+) serves as cofactor. Requires Mn(2+) as cofactor.

The catalysed reaction is (S)-malate + NAD(+) = pyruvate + CO2 + NADH. It catalyses the reaction oxaloacetate + H(+) = pyruvate + CO2. In Shewanella woodyi (strain ATCC 51908 / MS32), this protein is NAD-dependent malic enzyme.